Here is a 1620-residue protein sequence, read N- to C-terminus: ABC-type organic anion transporter ABCA8B (1620 aa).

Helical transmembrane passes span serine 30–glycine 50, phenylalanine 223–valine 243, serine 267–isoleucine 287, phenylalanine 298–leucine 318, serine 326–threonine 346, leucine 352–methionine 372, and leucine 396–methionine 416. Positions isoleucine 479–glutamine 714 constitute an ABC transporter 1 domain. Glycine 515–serine 522 is an ATP binding site. An N-linked (GlcNAc...) asparagine glycan is attached at asparagine 723. The next 8 membrane-spanning stretches (helical) occupy residues threonine 860–isoleucine 880, cysteine 979–alanine 999, threonine 1023–threonine 1043, methionine 1069–phenylalanine 1089, isoleucine 1105–isoleucine 1125, isoleucine 1135–phenylalanine 1155, isoleucine 1164–phenylalanine 1184, and valine 1194–threonine 1214. Positions leucine 1283 to lysine 1516 constitute an ABC transporter 2 domain. ATP is bound at residue glycine 1321–serine 1328.

This sequence belongs to the ABC transporter superfamily. ABCA family. In terms of tissue distribution, expressed in heart, brain, lung, liver and skeletal muscle. Highly expressed in the liver, and is also abundant in heart and skeletal muscle. Highly expressed in liver.

It localises to the cell membrane. The protein localises to the basolateral cell membrane. The enzyme catalyses taurocholate(in) + ATP + H2O = taurocholate(out) + ADP + phosphate + H(+). It catalyses the reaction cholesterol(in) + ATP + H2O = cholesterol(out) + ADP + phosphate + H(+). Its activity is regulated as follows. Cholesterol efflux is increased by extracellularly applied taurocholate. Its function is as follows. Mediates cholesterol and taurocholate efflux. Through the interaction with ABCA1 potentiates the cholesterol efflux to lipid-free APOA1, in turn regulates high-density lipoprotein cholesterol levels. The sequence is that of ABC-type organic anion transporter ABCA8B from Mus musculus (Mouse).